We begin with the raw amino-acid sequence, 709 residues long: Elongation factor G (709 aa).

One can recognise a tr-type G domain in the interval Asn-10 to Glu-295. GTP contacts are provided by residues Ala-19 to Thr-26, Asp-91 to His-95, and Asn-145 to Asp-148.

It belongs to the TRAFAC class translation factor GTPase superfamily. Classic translation factor GTPase family. EF-G/EF-2 subfamily.

It localises to the cytoplasm. In terms of biological role, catalyzes the GTP-dependent ribosomal translocation step during translation elongation. During this step, the ribosome changes from the pre-translocational (PRE) to the post-translocational (POST) state as the newly formed A-site-bound peptidyl-tRNA and P-site-bound deacylated tRNA move to the P and E sites, respectively. Catalyzes the coordinated movement of the two tRNA molecules, the mRNA and conformational changes in the ribosome. In Bifidobacterium adolescentis (strain ATCC 15703 / DSM 20083 / NCTC 11814 / E194a), this protein is Elongation factor G.